The primary structure comprises 103 residues: Large ribosomal subunit protein bL21 (103 aa).

It belongs to the bacterial ribosomal protein bL21 family. In terms of assembly, part of the 50S ribosomal subunit. Contacts protein L20.

This protein binds to 23S rRNA in the presence of protein L20. In Thiobacillus denitrificans (strain ATCC 25259 / T1), this protein is Large ribosomal subunit protein bL21.